The sequence spans 94 residues: Pyrimidine/purine nucleoside phosphorylase (94 aa).

This sequence belongs to the nucleoside phosphorylase PpnP family.

The catalysed reaction is a purine D-ribonucleoside + phosphate = a purine nucleobase + alpha-D-ribose 1-phosphate. It carries out the reaction adenosine + phosphate = alpha-D-ribose 1-phosphate + adenine. The enzyme catalyses cytidine + phosphate = cytosine + alpha-D-ribose 1-phosphate. It catalyses the reaction guanosine + phosphate = alpha-D-ribose 1-phosphate + guanine. The catalysed reaction is inosine + phosphate = alpha-D-ribose 1-phosphate + hypoxanthine. It carries out the reaction thymidine + phosphate = 2-deoxy-alpha-D-ribose 1-phosphate + thymine. The enzyme catalyses uridine + phosphate = alpha-D-ribose 1-phosphate + uracil. It catalyses the reaction xanthosine + phosphate = alpha-D-ribose 1-phosphate + xanthine. Functionally, catalyzes the phosphorolysis of diverse nucleosides, yielding D-ribose 1-phosphate and the respective free bases. Can use uridine, adenosine, guanosine, cytidine, thymidine, inosine and xanthosine as substrates. Also catalyzes the reverse reactions. This is Pyrimidine/purine nucleoside phosphorylase from Pseudomonas fluorescens (strain ATCC BAA-477 / NRRL B-23932 / Pf-5).